Here is a 159-residue protein sequence, read N- to C-terminus: Protein Smg homolog (159 aa).

Belongs to the Smg family.

The sequence is that of Protein Smg homolog from Nitrosococcus oceani (strain ATCC 19707 / BCRC 17464 / JCM 30415 / NCIMB 11848 / C-107).